A 431-amino-acid polypeptide reads, in one-letter code: Gamma-glutamyl phosphate reductase (431 aa).

This sequence belongs to the gamma-glutamyl phosphate reductase family.

It localises to the cytoplasm. It catalyses the reaction L-glutamate 5-semialdehyde + phosphate + NADP(+) = L-glutamyl 5-phosphate + NADPH + H(+). It participates in amino-acid biosynthesis; L-proline biosynthesis; L-glutamate 5-semialdehyde from L-glutamate: step 2/2. Catalyzes the NADPH-dependent reduction of L-glutamate 5-phosphate into L-glutamate 5-semialdehyde and phosphate. The product spontaneously undergoes cyclization to form 1-pyrroline-5-carboxylate. The chain is Gamma-glutamyl phosphate reductase from Methylobacterium sp. (strain 4-46).